A 200-amino-acid chain; its full sequence is Large ribosomal subunit protein uL4 (200 aa).

The tract at residues 38–72 is disordered; the sequence is GRQGTKQQKTRSDVAGGGKRPWRQKGTGRARAGTT.

Belongs to the universal ribosomal protein uL4 family. As to quaternary structure, part of the 50S ribosomal subunit.

Functionally, one of the primary rRNA binding proteins, this protein initially binds near the 5'-end of the 23S rRNA. It is important during the early stages of 50S assembly. It makes multiple contacts with different domains of the 23S rRNA in the assembled 50S subunit and ribosome. In terms of biological role, forms part of the polypeptide exit tunnel. This is Large ribosomal subunit protein uL4 from Pseudomonas entomophila (strain L48).